The primary structure comprises 299 residues: Nucleotide-binding protein DIP1313 (299 aa).

Residue 22–29 (GLSGAGLS) participates in ATP binding. 73-76 (DVRS) serves as a coordination point for GTP.

Belongs to the RapZ-like family.

Its function is as follows. Displays ATPase and GTPase activities. This chain is Nucleotide-binding protein DIP1313, found in Corynebacterium diphtheriae (strain ATCC 700971 / NCTC 13129 / Biotype gravis).